The chain runs to 896 residues: DNA mismatch repair protein MutS (896 aa).

Residue 599 to 606 participates in ATP binding; the sequence is GPNMAGKS.

Belongs to the DNA mismatch repair MutS family.

Functionally, this protein is involved in the repair of mismatches in DNA. It is possible that it carries out the mismatch recognition step. This protein has a weak ATPase activity. This Geobacillus kaustophilus (strain HTA426) protein is DNA mismatch repair protein MutS.